The following is a 118-amino-acid chain: Large ribosomal subunit protein bL20 (118 aa).

It belongs to the bacterial ribosomal protein bL20 family.

Its function is as follows. Binds directly to 23S ribosomal RNA and is necessary for the in vitro assembly process of the 50S ribosomal subunit. It is not involved in the protein synthesizing functions of that subunit. The chain is Large ribosomal subunit protein bL20 from Francisella tularensis subsp. tularensis (strain FSC 198).